A 441-amino-acid polypeptide reads, in one-letter code: Mitochondrial distribution and morphology protein 12 (441 aa).

Positions 1–441 constitute an SMP-LTD domain; it reads MSIDIDWERA…VYPSFWTFLV (441 aa). Disordered regions lie at residues 68–89 and 183–289; these read DFYEDGDEDLSVSSEEQSPMRE and RAVT…RMRE. Composition is skewed to polar residues over residues 226–245 and 253–263; these read SRPSTANTGNTLLSRGSVST and PSQTLLANNPG.

Belongs to the MDM12 family. As to quaternary structure, component of the ER-mitochondria encounter structure (ERMES) or MDM complex, composed of MMM1, MDM10, MDM12 and MDM34. An MMM1 homodimer associates with one molecule of MDM12 on each side in a pairwise head-to-tail manner, and the SMP-LTD domains of MMM1 and MDM12 generate a continuous hydrophobic tunnel for phospholipid trafficking.

The protein localises to the mitochondrion outer membrane. The protein resides in the endoplasmic reticulum membrane. In terms of biological role, component of the ERMES/MDM complex, which serves as a molecular tether to connect the endoplasmic reticulum (ER) and mitochondria. Components of this complex are involved in the control of mitochondrial shape and protein biogenesis, and function in nonvesicular lipid trafficking between the ER and mitochondria. MDM12 is required for the interaction of the ER-resident membrane protein MMM1 and the outer mitochondrial membrane-resident beta-barrel protein MDM10. The MDM12-MMM1 subcomplex functions in the major beta-barrel assembly pathway that is responsible for biogenesis of all mitochondrial outer membrane beta-barrel proteins, and acts in a late step after the SAM complex. The MDM10-MDM12-MMM1 subcomplex further acts in the TOM40-specific pathway after the action of the MDM12-MMM1 complex. Essential for establishing and maintaining the structure of mitochondria and maintenance of mtDNA nucleoids. This is Mitochondrial distribution and morphology protein 12 from Paracoccidioides lutzii (strain ATCC MYA-826 / Pb01) (Paracoccidioides brasiliensis).